A 395-amino-acid polypeptide reads, in one-letter code: Argininosuccinate synthase (395 aa).

7–15 (LYSGGLDTS) contributes to the ATP binding site. Y83 is an L-citrulline binding site. G113 contributes to the ATP binding site. L-aspartate contacts are provided by T115, N119, and D120. N119 lines the L-citrulline pocket. L-citrulline contacts are provided by R123, S169, S178, E253, and Y265.

Belongs to the argininosuccinate synthase family. Type 1 subfamily. Homotetramer.

It is found in the cytoplasm. It carries out the reaction L-citrulline + L-aspartate + ATP = 2-(N(omega)-L-arginino)succinate + AMP + diphosphate + H(+). It functions in the pathway amino-acid biosynthesis; L-arginine biosynthesis; L-arginine from L-ornithine and carbamoyl phosphate: step 2/3. In Picrophilus torridus (strain ATCC 700027 / DSM 9790 / JCM 10055 / NBRC 100828 / KAW 2/3), this protein is Argininosuccinate synthase.